The primary structure comprises 136 residues: Protein NrdI (136 aa).

This sequence belongs to the NrdI family.

Functionally, probably involved in ribonucleotide reductase function. The sequence is that of Protein NrdI from Salmonella newport (strain SL254).